The sequence spans 262 residues: Trypsin eta (262 aa).

The N-terminal stretch at 1–22 (MNKVILRILAVLFLLGIYAVSA) is a signal peptide. A propeptide spans 23 to 27 (QSDGR) (activation peptide). The Peptidase S1 domain occupies 28-259 (IVGGADTSSY…YKDWIAKQRT (232 aa)). Cys59 and Cys75 are oxidised to a cystine. Residues His74 and Asp120 each act as charge relay system in the active site. Disulfide bonds link Cys185/Cys200 and Cys211/Cys235. The Charge relay system role is filled by Ser215.

The protein belongs to the peptidase S1 family.

The protein resides in the secreted. It localises to the extracellular space. It catalyses the reaction Preferential cleavage: Arg-|-Xaa, Lys-|-Xaa.. The sequence is that of Trypsin eta (etaTry) from Drosophila melanogaster (Fruit fly).